The sequence spans 197 residues: Imidazoleglycerol-phosphate dehydratase (197 aa).

This sequence belongs to the imidazoleglycerol-phosphate dehydratase family.

The protein resides in the cytoplasm. It carries out the reaction D-erythro-1-(imidazol-4-yl)glycerol 3-phosphate = 3-(imidazol-4-yl)-2-oxopropyl phosphate + H2O. It functions in the pathway amino-acid biosynthesis; L-histidine biosynthesis; L-histidine from 5-phospho-alpha-D-ribose 1-diphosphate: step 6/9. The protein is Imidazoleglycerol-phosphate dehydratase of Rhodopseudomonas palustris (strain BisB5).